A 439-amino-acid chain; its full sequence is Tryptophan synthase beta chain 2 (439 aa).

Residue Lys99 is modified to N6-(pyridoxal phosphate)lysine.

Belongs to the TrpB family. In terms of assembly, tetramer of two alpha and two beta chains. Pyridoxal 5'-phosphate serves as cofactor.

It carries out the reaction (1S,2R)-1-C-(indol-3-yl)glycerol 3-phosphate + L-serine = D-glyceraldehyde 3-phosphate + L-tryptophan + H2O. It functions in the pathway amino-acid biosynthesis; L-tryptophan biosynthesis; L-tryptophan from chorismate: step 5/5. Its function is as follows. The beta subunit is responsible for the synthesis of L-tryptophan from indole and L-serine. In Corynebacterium efficiens (strain DSM 44549 / YS-314 / AJ 12310 / JCM 11189 / NBRC 100395), this protein is Tryptophan synthase beta chain 2 (trpB2).